The sequence spans 402 residues: Multidrug resistance protein MdtH (402 aa).

The Cytoplasmic portion of the chain corresponds to 1–12; sequence MSRVSQARNLGK. A helical membrane pass occupies residues 13–33; that stretch reads YFLLIDNMLVVLVFFVVFPLI. At 34 to 98 the chain is on the periplasmic side; sequence SIRFVDQMGW…GFATMGIAHE (65 aa). The helical transmembrane segment at 99–116 threads the bilayer; it reads PWLLWFSCFLSGLGGTLF. Over 117–138 the chain is Cytoplasmic; sequence DPPRSALVVKLIRPEQRGRFFS. A helical membrane pass occupies residues 139 to 159; that stretch reads LLMMQDSAGAVIGALLGSWLL. Topologically, residues 160–164 are periplasmic; that stretch reads QYDFR. Residues 165-185 form a helical membrane-spanning segment; the sequence is LVCATGAILFILCALFNAWLL. At 186 to 213 the chain is on the cytoplasmic side; the sequence is PAWKLSTVRTPVREGMRRVMSDKRFVTY. A helical membrane pass occupies residues 214–234; sequence VLTLAGYYMLAVQVMLMLPIM. Over 235-243 the chain is Periplasmic; sequence VNDIAGSPA. A helical transmembrane segment spans residues 244-264; it reads AVKWMYAIEACLSLTLLYPIA. Residues 265–276 are Cytoplasmic-facing; sequence RWSEKRFRLEHR. A helical membrane pass occupies residues 277–297; sequence LMAGLLVMSLSMIPIGMVGNL. Topologically, residues 298-299 are periplasmic; it reads QQ. The chain crosses the membrane as a helical span at residues 300–320; that stretch reads LFTLICAFYIGSVIAEPARET. Topologically, residues 321 to 339 are cytoplasmic; it reads LSASLADARARGSYMGFSR. Residues 340-360 traverse the membrane as a helical segment; the sequence is LGLAIGGAIGYIGGGWLFDMG. Residues 361-367 lie on the Periplasmic side of the membrane; that stretch reads KALTQPE. A helical membrane pass occupies residues 368-388; sequence LPWMMLGIIGFITFLALGWQF. Residues 389–402 lie on the Cytoplasmic side of the membrane; that stretch reads SHKRTPRRMLEPGA.

This sequence belongs to the major facilitator superfamily. DHA1 family. MdtH (TC 2.A.1.2.21) subfamily.

The protein localises to the cell inner membrane. The sequence is that of Multidrug resistance protein MdtH from Salmonella choleraesuis (strain SC-B67).